The sequence spans 560 residues: Chaperonin GroEL 2 (560 aa).

Residues 29-32 (TIGP), 86-90 (DGTTT), Gly413, and Asp492 each bind ATP. The disordered stretch occupies residues 520–542 (DKPEPPSAPGAEGGDPMGGMGGM). Positions 530–542 (AEGGDPMGGMGGM) are enriched in gly residues.

This sequence belongs to the chaperonin (HSP60) family. In terms of assembly, forms a cylinder of 14 subunits composed of two heptameric rings stacked back-to-back. Interacts with the co-chaperonin GroES.

It is found in the cytoplasm. The catalysed reaction is ATP + H2O + a folded polypeptide = ADP + phosphate + an unfolded polypeptide.. In terms of biological role, together with its co-chaperonin GroES, plays an essential role in assisting protein folding. The GroEL-GroES system forms a nano-cage that allows encapsulation of the non-native substrate proteins and provides a physical environment optimized to promote and accelerate protein folding. The polypeptide is Chaperonin GroEL 2 (Prochlorococcus marinus (strain NATL2A)).